The following is a 151-amino-acid chain: Methylated-DNA--protein-cysteine methyltransferase (151 aa).

The active-site Nucleophile; methyl group acceptor is C119.

This sequence belongs to the MGMT family.

It localises to the cytoplasm. The catalysed reaction is a 6-O-methyl-2'-deoxyguanosine in DNA + L-cysteinyl-[protein] = S-methyl-L-cysteinyl-[protein] + a 2'-deoxyguanosine in DNA. The enzyme catalyses a 4-O-methyl-thymidine in DNA + L-cysteinyl-[protein] = a thymidine in DNA + S-methyl-L-cysteinyl-[protein]. Functionally, involved in the cellular defense against the biological effects of O6-methylguanine (O6-MeG) and O4-methylthymine (O4-MeT) in DNA. Repairs the methylated nucleobase in DNA by stoichiometrically transferring the methyl group to a cysteine residue in the enzyme. This is a suicide reaction: the enzyme is irreversibly inactivated. The protein is Methylated-DNA--protein-cysteine methyltransferase of Saccharolobus islandicus (strain L.S.2.15 / Lassen #1) (Sulfolobus islandicus).